The primary structure comprises 290 residues: MKKIIAITGPTASGKTSLSIKIAKKFNLEIINCDSTQIYQQYNIGTAKITKEEMEGVKHHLLDFLPPEEKYSIYHFQKSARAKIKDINNPLFVGGSGLYLKAALFDYELTPKPLMPQNVCEQDLQKMLAIIKEKDPQLVLDTKNPLRIISSYYDIVSGHLRSQKTKKNVPLYSLLIFYLDIDRKELKNRVVLRLEKMLNEGFVEEVKNIQTNFPQANFNIIGYREIKDFLEGKYSITEAKNKICQKTMQYAKRQKTWFKNQLQPVVVDALSPSLEKKVFQLVFDFLHKRS.

9-16 serves as a coordination point for ATP; that stretch reads GPTASGKT. 11 to 16 lines the substrate pocket; it reads TASGKT. Residues 34–37 form an interaction with substrate tRNA region; sequence DSTQ.

Belongs to the IPP transferase family. Monomer. It depends on Mg(2+) as a cofactor.

It carries out the reaction adenosine(37) in tRNA + dimethylallyl diphosphate = N(6)-dimethylallyladenosine(37) in tRNA + diphosphate. Functionally, catalyzes the transfer of a dimethylallyl group onto the adenine at position 37 in tRNAs that read codons beginning with uridine, leading to the formation of N6-(dimethylallyl)adenosine (i(6)A). In Phytoplasma australiense, this protein is tRNA dimethylallyltransferase.